The sequence spans 135 residues: C-type lectin PAL (135 aa).

Intrachain disulfides connect Cys3–Cys14, Cys31–Cys131, Cys38–Cys133, and Cys106–Cys123. Positions 10-132 (MNGLCYKIFD…CGSKNAFLCQ (123 aa)) constitute a C-type lectin domain. Gln96, Asp98, Glu104, Asn119, and Asp120 together coordinate Ca(2+). Positions 96–98 (QPD) match the Galactose-binding motif.

Belongs to the true venom lectin family. Homodimer; disulfide-linked. As to expression, expressed by the venom gland.

It localises to the secreted. Its function is as follows. Galactose-binding lectin which recognizes specific carbohydrate structures and agglutinates a variety of animal cells by binding to cell-surface glycoproteins and glycolipids. This is a calcium-dependent lectin. Shows high hemagglutinating activity (MHC is 0.25 ug/ml on rabbit erythrocytes). This chain is C-type lectin PAL, found in Bitis arietans (African puff adder).